Consider the following 198-residue polypeptide: MVTDGPAALAEFDRSGADIVLLDLMLPGMSGTDVYKQLRVRSSVPVIMVTARDSEIDKVVGLELGADDYVTKPYSARELIARIRAVLRRGGDDDSEISDGVLESGPLRMDVERHVVSVNGYAITLPLKEFDLLEYLMRNSGRVLTRGQLIDRVWGVDYVGDTKTLDVHVKRLRSKIEADPANPVHLVTVRGLGYKLES.

The region spanning 1–87 (MVTDGPAALA…ELIARIRAVL (87 aa)) is the Response regulatory domain. Residue Asp-23 is modified to 4-aspartylphosphate. A DNA-binding region (ompR/PhoB-type) is located at residues 99 to 198 (DGVLESGPLR…VRGLGYKLES (100 aa)).

Post-translationally, phosphorylated by SenX3.

Its function is as follows. Member of the two-component regulatory system SenX3/RegX3. The sequence is that of Sensory transduction protein RegX3 (rgx3) from Mycobacterium leprae (strain TN).